The sequence spans 1035 residues: MSGSYPFIDIAALDSVREGFARGDAQLVLAHDLSTVLWVNGPGAKLFGYNRVEDLIEGQLDLPVATRRQIAAFSSENTSAPSAVAVRLGGGLRSELTHLHVSNIKLPDGVAALLVATQMPDNSAEAAISGLGDDSTHIALVDAVGKVVAASPRFALLDISASTLEDLIVEAGDATDRIVKRRIRTGSHSVPGAIARLTDTPALHLLCIVGDAPAQFQTAAEAVPLPDNAEAVLEEILPEQGDAPAQQAQKTHAEQPRPKTFAFDHDAPPARFIWKVGPDGTFSEISPNLAAVVGPNSADIVGRRFSDVANVFGFDTDGSIAALLLERDTWSGKRLLWPVEGTRLRVPVELAALPVYSRDREFLGFRGFGIVRPAEAEADPEEIGLALAGGIPQNRKPRKEPAETARMVGEDDVLALSEEVANDDQPAAVLPKPPLDITPTPGRRDSDKVISLLNSCAQEKVAADQAKFLKEKERATRPEGGLTKTERNAFREIAERLRKQGLANTRAESETPVSETSSIEPVEPTPPVKTRSEPIQPDETALLANLPVPVIIHSGDAIHYVNQALLDITGYESLDDIRSAGGVDVLFNSESDDGETRQSMLLRHADGSEEPVDAHLNAIAWRGGRALMLSLMPVTAADLPAPAELPAANDEEKQALEAHVEELKTILDTATDGVVLIDPEGRIRSMNHSASALFGYERDEAEGKFFSMLFAIESQRAAMDYLHGLSGNGVLSVLNDGREVIGREAKGGFIPLFMTIGKLPHTRGFCAVLRDITQWKRTEEELTNARKEAERASNQKTEFLARISHEIRTPLNAIIGFSELMADEKFGPIGNDRYRDYLRDINRSGNHVLALVNDLLDISKIEAGALDMQFEAVSLNDAIGEAIALMQPQANRERVIIRSSFQSNLPDIVADSRSIKQVALNLLSNAVRFTAPGGQVIVSTSYELNGDVVMRVRDTGIGMSKSEVEQALKPFRQINALERRKAESAKDWRNEGTGLGLPLTKAMVEANRAQFAIDSNPGQGTVVEIVFPPTRVLAD.

Positions 1 to 613 (MSGSYPFIDI…HADGSEEPVD (613 aa)) are important for polar localization. The segment at 500 to 533 (QGLANTRAESETPVSETSSIEPVEPTPPVKTRSE) is disordered. The interval 614-1035 (AHLNAIAWRG…VFPPTRVLAD (422 aa)) is interaction with DivK. One can recognise a PAS domain in the interval 659–730 (HVEELKTILD…YLHGLSGNGV (72 aa)). The Histidine kinase domain maps to 802–1031 (RISHEIRTPL…VVEIVFPPTR (230 aa)). His-805 is subject to Phosphohistidine; by autocatalysis.

Interacts with DivK.

It is found in the cytoplasm. The enzyme catalyses ATP + protein L-histidine = ADP + protein N-phospho-L-histidine.. Functionally, functions as a polar differentiation marker. Essential protein that, by localizing in the old pole of dividing cells, controls cell division and maturation, probably through control of DivK phosphorylation status and cellular distribution, which in turn regulates CtrA, a transcriptional regulator of the minB operon. The asymmetrical localization of this protein is probably required for cells to enter a new division cycle. The protein is Cell-division control histidine kinase PdhS (pdhS) of Brucella abortus (strain S19).